The chain runs to 62 residues: Photosystem II reaction center protein Z (62 aa).

Helical transmembrane passes span 8-28 and 41-61; these read AVFA…VVFA and FSGT…NSLI.

The protein belongs to the PsbZ family. As to quaternary structure, PSII is composed of 1 copy each of membrane proteins PsbA, PsbB, PsbC, PsbD, PsbE, PsbF, PsbH, PsbI, PsbJ, PsbK, PsbL, PsbM, PsbT, PsbY, PsbZ, Psb30/Ycf12, at least 3 peripheral proteins of the oxygen-evolving complex and a large number of cofactors. It forms dimeric complexes.

It is found in the plastid. The protein resides in the chloroplast thylakoid membrane. May control the interaction of photosystem II (PSII) cores with the light-harvesting antenna, regulates electron flow through the 2 photosystem reaction centers. PSII is a light-driven water plastoquinone oxidoreductase, using light energy to abstract electrons from H(2)O, generating a proton gradient subsequently used for ATP formation. The sequence is that of Photosystem II reaction center protein Z from Cucumis sativus (Cucumber).